A 396-amino-acid chain; its full sequence is Elongation factor Tu (396 aa).

The tr-type G domain occupies 10–206 (KPHVNVGTIG…ALDTYIPTPE (197 aa)). The tract at residues 19-26 (GHVDHGKT) is G1. GTP is bound at residue 19 to 26 (GHVDHGKT). Thr-26 contributes to the Mg(2+) binding site. Positions 60–64 (GITIN) are G2. The tract at residues 81–84 (DCPG) is G3. GTP is bound by residues 81-85 (DCPGH) and 136-139 (NKCD). The segment at 136-139 (NKCD) is G4. Residues 174 to 176 (SAK) form a G5 region.

This sequence belongs to the TRAFAC class translation factor GTPase superfamily. Classic translation factor GTPase family. EF-Tu/EF-1A subfamily. In terms of assembly, monomer.

The protein localises to the cytoplasm. It catalyses the reaction GTP + H2O = GDP + phosphate + H(+). In terms of biological role, GTP hydrolase that promotes the GTP-dependent binding of aminoacyl-tRNA to the A-site of ribosomes during protein biosynthesis. In Thiomonas delicata (Thiomonas cuprina), this protein is Elongation factor Tu.